A 488-amino-acid polypeptide reads, in one-letter code: Germacrene A hydroxylase (488 aa).

Residues 7–23 (TSIALATILFFVYKFAT) form a helical; Signal-anchor for type II membrane protein membrane-spanning segment. Asparagine 169, asparagine 260, asparagine 379, and asparagine 410 each carry an N-linked (GlcNAc...) asparagine glycan. Heme is bound at residue cysteine 432.

Belongs to the cytochrome P450 family. As to expression, expressed in floral glandular trichomes.

It localises to the endoplasmic reticulum membrane. The enzyme catalyses (+)-(R)-germacrene A + 3 reduced [NADPH--hemoprotein reductase] + 3 O2 = germacra-1(10),4,11(13)-trien-12-oate + 3 oxidized [NADPH--hemoprotein reductase] + 4 H2O + 4 H(+). It participates in secondary metabolite biosynthesis; terpenoid biosynthesis. In terms of biological role, involved in the biosynthesis of germacrene-derived sesquiterpene lactones. Component of the parthenolide biosynthetic pathway; parthenolide and conjugates are promising anti-cancer drugs highly active against colon cancer cells. Catalyzes three consecutive oxidations of germacrene A to produce germacrene A acid. This chain is Germacrene A hydroxylase, found in Tanacetum parthenium (Feverfew).